Reading from the N-terminus, the 295-residue chain is Shikimate dehydrogenase (NADP(+)) (295 aa).

Residues 21-23 and T68 contribute to the shikimate site; that span reads SLS. K72 functions as the Proton acceptor in the catalytic mechanism. Residues N93 and D108 each coordinate shikimate. NADP(+)-binding positions include 132–136, 156–161, and L228; these read GAGGA and NRTPER. Shikimate is bound at residue Y230. G251 contacts NADP(+).

It belongs to the shikimate dehydrogenase family. In terms of assembly, homodimer.

The enzyme catalyses shikimate + NADP(+) = 3-dehydroshikimate + NADPH + H(+). It participates in metabolic intermediate biosynthesis; chorismate biosynthesis; chorismate from D-erythrose 4-phosphate and phosphoenolpyruvate: step 4/7. Its function is as follows. Involved in the biosynthesis of the chorismate, which leads to the biosynthesis of aromatic amino acids. Catalyzes the reversible NADPH linked reduction of 3-dehydroshikimate (DHSA) to yield shikimate (SA). In Moorella thermoacetica (strain ATCC 39073 / JCM 9320), this protein is Shikimate dehydrogenase (NADP(+)).